Reading from the N-terminus, the 668-residue chain is tRNA 5-methylaminomethyl-2-thiouridine biosynthesis bifunctional protein MnmC (668 aa).

A tRNA (mnm(5)s(2)U34)-methyltransferase region spans residues 1-245 (MKHYSIQPAN…KREMLCGVME (245 aa)). The interval 270-668 (IGGGIASALL…LLKGKAVKAG (399 aa)) is FAD-dependent cmnm(5)s(2)U34 oxidoreductase.

The protein in the N-terminal section; belongs to the methyltransferase superfamily. tRNA (mnm(5)s(2)U34)-methyltransferase family. This sequence in the C-terminal section; belongs to the DAO family. FAD serves as cofactor.

The protein localises to the cytoplasm. The catalysed reaction is 5-aminomethyl-2-thiouridine(34) in tRNA + S-adenosyl-L-methionine = 5-methylaminomethyl-2-thiouridine(34) in tRNA + S-adenosyl-L-homocysteine + H(+). Catalyzes the last two steps in the biosynthesis of 5-methylaminomethyl-2-thiouridine (mnm(5)s(2)U) at the wobble position (U34) in tRNA. Catalyzes the FAD-dependent demodification of cmnm(5)s(2)U34 to nm(5)s(2)U34, followed by the transfer of a methyl group from S-adenosyl-L-methionine to nm(5)s(2)U34, to form mnm(5)s(2)U34. The protein is tRNA 5-methylaminomethyl-2-thiouridine biosynthesis bifunctional protein MnmC of Escherichia coli O157:H7.